We begin with the raw amino-acid sequence, 160 residues long: Phosphopantetheine adenylyltransferase (160 aa).

Thr-10 provides a ligand contact to substrate. Residues Thr-10–Phe-11 and His-18 contribute to the ATP site. Substrate-binding residues include Lys-42, Leu-74, and Arg-88. Residues Gly-89–Arg-91, Glu-99, and Asn-124–Thr-130 contribute to the ATP site.

The protein belongs to the bacterial CoaD family. In terms of assembly, homohexamer. It depends on Mg(2+) as a cofactor.

The protein localises to the cytoplasm. It carries out the reaction (R)-4'-phosphopantetheine + ATP + H(+) = 3'-dephospho-CoA + diphosphate. It participates in cofactor biosynthesis; coenzyme A biosynthesis; CoA from (R)-pantothenate: step 4/5. Reversibly transfers an adenylyl group from ATP to 4'-phosphopantetheine, yielding dephospho-CoA (dPCoA) and pyrophosphate. The chain is Phosphopantetheine adenylyltransferase from Shewanella piezotolerans (strain WP3 / JCM 13877).